We begin with the raw amino-acid sequence, 424 residues long: Tyrosine--tRNA ligase (424 aa).

Residue Y37 participates in L-tyrosine binding. The short motif at 42 to 51 (PTADSLHLGH) is the 'HIGH' region element. Positions 175 and 179 each coordinate L-tyrosine. Positions 235 to 239 (KFGKT) match the 'KMSKS' region motif. Residue K238 coordinates ATP. Positions 357–414 (AELQKALVSAQLAPSRSQARTLIQSSSISVNGKKQLKPEYIFTSEDRLLDRYTLLRRG) constitute an S4 RNA-binding domain.

Belongs to the class-I aminoacyl-tRNA synthetase family. TyrS type 1 subfamily. Homodimer.

It localises to the cytoplasm. The catalysed reaction is tRNA(Tyr) + L-tyrosine + ATP = L-tyrosyl-tRNA(Tyr) + AMP + diphosphate + H(+). In terms of biological role, catalyzes the attachment of tyrosine to tRNA(Tyr) in a two-step reaction: tyrosine is first activated by ATP to form Tyr-AMP and then transferred to the acceptor end of tRNA(Tyr). The polypeptide is Tyrosine--tRNA ligase (Hamiltonella defensa subsp. Acyrthosiphon pisum (strain 5AT)).